A 24-amino-acid polypeptide reads, in one-letter code: M-poneritoxin-Ng2b (24 aa).

At Leu-24 the chain carries Leucine amide.

Expressed by the venom gland.

It localises to the secreted. Functionally, has a broad spectrum of activity against both Gram-positive and Gram-negative bacteria. Is inactive against yeast, erythrocytes, and insects. The sequence is that of M-poneritoxin-Ng2b from Neoponera goeldii (Ponerine ant).